The following is an 86-amino-acid chain: Large ribosomal subunit protein bL31B (86 aa).

This sequence belongs to the bacterial ribosomal protein bL31 family. Type B subfamily. Part of the 50S ribosomal subunit.

The protein is Large ribosomal subunit protein bL31B of Streptococcus agalactiae serotype Ia (strain ATCC 27591 / A909 / CDC SS700).